The following is a 262-amino-acid chain: Type II restriction enzyme MspI (262 aa).

It carries out the reaction Endonucleolytic cleavage of DNA to give specific double-stranded fragments with terminal 5'-phosphates.. Its function is as follows. A P subtype restriction enzyme that recognizes the double-stranded sequence 5'-CCGG-3' and cleaves after C-1. The protein is Type II restriction enzyme MspI (mspIR) of Moraxella sp.